Here is a 454-residue protein sequence, read N- to C-terminus: Probable glycine dehydrogenase (decarboxylating) subunit 1 (454 aa).

Belongs to the GcvP family. N-terminal subunit subfamily. In terms of assembly, the glycine cleavage system is composed of four proteins: P, T, L and H. In this organism, the P 'protein' is a heterodimer of two subunits.

The catalysed reaction is N(6)-[(R)-lipoyl]-L-lysyl-[glycine-cleavage complex H protein] + glycine + H(+) = N(6)-[(R)-S(8)-aminomethyldihydrolipoyl]-L-lysyl-[glycine-cleavage complex H protein] + CO2. Functionally, the glycine cleavage system catalyzes the degradation of glycine. The P protein binds the alpha-amino group of glycine through its pyridoxal phosphate cofactor; CO(2) is released and the remaining methylamine moiety is then transferred to the lipoamide cofactor of the H protein. This chain is Probable glycine dehydrogenase (decarboxylating) subunit 1, found in Sorangium cellulosum (strain So ce56) (Polyangium cellulosum (strain So ce56)).